The following is a 353-amino-acid chain: Holliday junction branch migration complex subunit RuvB (353 aa).

The tract at residues 4-185 (ADRLITAVGG…FGIVQRLEFY (182 aa)) is large ATPase domain (RuvB-L). Residues I24, R25, G66, K69, T70, T71, 132 to 134 (EDF), R175, Y185, and R222 contribute to the ATP site. T70 contributes to the Mg(2+) binding site. A small ATPAse domain (RuvB-S) region spans residues 186–256 (NIADLSTIVA…TADKALNLLD (71 aa)). Residues 259 to 353 (EHGFDHQDRR…GEFVDDAADL (95 aa)) are head domain (RuvB-H). Residues R295, R314, and R319 each coordinate DNA.

It belongs to the RuvB family. Homohexamer. Forms an RuvA(8)-RuvB(12)-Holliday junction (HJ) complex. HJ DNA is sandwiched between 2 RuvA tetramers; dsDNA enters through RuvA and exits via RuvB. An RuvB hexamer assembles on each DNA strand where it exits the tetramer. Each RuvB hexamer is contacted by two RuvA subunits (via domain III) on 2 adjacent RuvB subunits; this complex drives branch migration. In the full resolvosome a probable DNA-RuvA(4)-RuvB(12)-RuvC(2) complex forms which resolves the HJ.

It localises to the cytoplasm. It carries out the reaction ATP + H2O = ADP + phosphate + H(+). In terms of biological role, the RuvA-RuvB-RuvC complex processes Holliday junction (HJ) DNA during genetic recombination and DNA repair, while the RuvA-RuvB complex plays an important role in the rescue of blocked DNA replication forks via replication fork reversal (RFR). RuvA specifically binds to HJ cruciform DNA, conferring on it an open structure. The RuvB hexamer acts as an ATP-dependent pump, pulling dsDNA into and through the RuvAB complex. RuvB forms 2 homohexamers on either side of HJ DNA bound by 1 or 2 RuvA tetramers; 4 subunits per hexamer contact DNA at a time. Coordinated motions by a converter formed by DNA-disengaged RuvB subunits stimulates ATP hydrolysis and nucleotide exchange. Immobilization of the converter enables RuvB to convert the ATP-contained energy into a lever motion, pulling 2 nucleotides of DNA out of the RuvA tetramer per ATP hydrolyzed, thus driving DNA branch migration. The RuvB motors rotate together with the DNA substrate, which together with the progressing nucleotide cycle form the mechanistic basis for DNA recombination by continuous HJ branch migration. Branch migration allows RuvC to scan DNA until it finds its consensus sequence, where it cleaves and resolves cruciform DNA. This is Holliday junction branch migration complex subunit RuvB from Pseudomonas syringae pv. tomato (strain ATCC BAA-871 / DC3000).